The primary structure comprises 511 residues: D-alanine--D-alanyl carrier protein ligase (511 aa).

ATP is bound at residue 152–153 (TS). Asp199 lines the D-alanine pocket. 294 to 299 (NAYGPT) contributes to the ATP binding site. Val303 serves as a coordination point for D-alanine. Residues Asp385, 397-400 (YGGR), and Lys499 contribute to the ATP site. Lys499 lines the D-alanine pocket.

This sequence belongs to the ATP-dependent AMP-binding enzyme family. DltA subfamily.

The protein resides in the cytoplasm. The enzyme catalyses holo-[D-alanyl-carrier protein] + D-alanine + ATP = D-alanyl-[D-alanyl-carrier protein] + AMP + diphosphate. The protein operates within cell wall biogenesis; lipoteichoic acid biosynthesis. Catalyzes the first step in the D-alanylation of lipoteichoic acid (LTA), the activation of D-alanine and its transfer onto the D-alanyl carrier protein (Dcp) DltC. In an ATP-dependent two-step reaction, forms a high energy D-alanyl-AMP intermediate, followed by transfer of the D-alanyl residue as a thiol ester to the phosphopantheinyl prosthetic group of the Dcp. D-alanylation of LTA plays an important role in modulating the properties of the cell wall in Gram-positive bacteria, influencing the net charge of the cell wall. This Streptococcus agalactiae serotype V (strain ATCC BAA-611 / 2603 V/R) protein is D-alanine--D-alanyl carrier protein ligase.